Consider the following 390-residue polypeptide: MASPEASSSGNTEDLRIEDLFHQKRNEDTIAKIFSIIYAPVGLIILLIRVFLGFHTFIVACLLRKSAALRMHTLRIMCSILGIVVEKSGHRDESARVLCANHVSILDHLAVDILTPCLLPSVWDIPSIIRWCFGYVDLGATRGRDQLVSRAKQLLTREQMPLLAFPEGIITSGEKALIKFNTWCFEVSSVVQPVSVRVWRPYPWKVSVSVLGSSWWTDLFYFFALPFTVITVEYLPKMERRENESLEEFTARVAETLAGNLKIAVSKFGISDATEAAKRLRTDRERAKKVVVREKTSPRLADPRQMDECAMRIKQSFPSFHLSAIRRDLEKTRSQTTTVNNLKAGKISSSASDGQTGKVTLDAGTWRGVFDNRKWQMIEVNRQKYMNRDS.

Topologically, residues 1–32 (MASPEASSSGNTEDLRIEDLFHQKRNEDTIAK) are cytoplasmic. The stretch at 33–53 (IFSIIYAPVGLIILLIRVFLG) is an intramembrane region. The Cytoplasmic portion of the chain corresponds to 54-390 (FHTFIVACLL…NRQKYMNRDS (337 aa)). The CUE domain maps to 305–347 (QMDECAMRIKQSFPSFHLSAIRRDLEKTRSQTTTVNNLKAGKI).

The protein belongs to the AUP1 family.

The protein resides in the endoplasmic reticulum membrane. It localises to the lipid droplet. The chain is Lipid droplet-regulating VLDL assembly factor AUP1 homolog from Caenorhabditis elegans.